The following is a 136-amino-acid chain: MSLTLRVLAPDQNVFDGSADEVILPSTTGQLGILPGHISLLTAIDVGVLRVRANGGWNSIALMGGFAEVDADEVTVLVNQAELGSTIDGNTAEADFQKATTVVDGLEGQPASPEKVKAQQQLNMARARMQASKSAD.

This sequence belongs to the ATPase epsilon chain family. In terms of assembly, F-type ATPases have 2 components, CF(1) - the catalytic core - and CF(0) - the membrane proton channel. CF(1) has five subunits: alpha(3), beta(3), gamma(1), delta(1), epsilon(1). CF(0) has three main subunits: a, b and c.

The protein resides in the cellular thylakoid membrane. Functionally, produces ATP from ADP in the presence of a proton gradient across the membrane. This Parasynechococcus marenigrum (strain WH8102) protein is ATP synthase epsilon chain.